The chain runs to 496 residues: Galactokinase (496 aa).

Ala-2 carries the post-translational modification N-acetylalanine. Residues Arg-56, Glu-62, His-63, and Asp-65 each contribute to the alpha-D-galactose site. Residues Gly-161, Gly-163, Ser-165, and Ser-166 each coordinate ATP. Asp-210 is an alpha-D-galactose binding site. The active-site Proton acceptor is the Asp-210. The ATP site is built by Ser-252, Gln-253, and Lys-254. Tyr-262 contacts alpha-D-galactose.

Belongs to the GHMP kinase family. GalK subfamily. Requires Mg(2+) as cofactor. Mn(2+) is required as a cofactor. Ca(2+) serves as cofactor. In terms of tissue distribution, expressed in roots, stems, leaves, flowers and young siliques. Higher expression in the elongating middle stem region than in the lower or upper stem region.

The catalysed reaction is alpha-D-galactose + ATP = alpha-D-galactose 1-phosphate + ADP + H(+). It participates in carbohydrate metabolism; galactose metabolism. Functionally, sugar-1-kinase with a very high substrate specificity for the alpha-anomeric configuration of D-galacose (D-Gal). Also efficiently converts 2-deoxy-D-Gal to 2-deoxy-D-al-1-phosphate. In Arabidopsis thaliana (Mouse-ear cress), this protein is Galactokinase (GAL1).